Reading from the N-terminus, the 378-residue chain is Erythronate-4-phosphate dehydrogenase (378 aa).

Substrate-binding residues include Ser-45 and Thr-66. The NAD(+) site is built by Asp-146 and Thr-175. Arg-208 is an active-site residue. NAD(+) is bound at residue Asp-232. Glu-237 is an active-site residue. Residue His-254 is the Proton donor of the active site. Gly-257 serves as a coordination point for NAD(+). Residue Tyr-258 coordinates substrate.

Belongs to the D-isomer specific 2-hydroxyacid dehydrogenase family. PdxB subfamily. As to quaternary structure, homodimer.

The protein resides in the cytoplasm. It carries out the reaction 4-phospho-D-erythronate + NAD(+) = (R)-3-hydroxy-2-oxo-4-phosphooxybutanoate + NADH + H(+). Its pathway is cofactor biosynthesis; pyridoxine 5'-phosphate biosynthesis; pyridoxine 5'-phosphate from D-erythrose 4-phosphate: step 2/5. Functionally, catalyzes the oxidation of erythronate-4-phosphate to 3-hydroxy-2-oxo-4-phosphonooxybutanoate. In Escherichia coli (strain 55989 / EAEC), this protein is Erythronate-4-phosphate dehydrogenase.